The chain runs to 220 residues: Catechol O-methyltransferase (220 aa).

Residues V44, E66, 68–69 (GT), S74, E92, and A121 contribute to the S-adenosyl-L-methionine site. D139 is a binding site for a divalent metal cation. D141 serves as a coordination point for S-adenosyl-L-methionine. 2 residues coordinate a divalent metal cation: D165 and N166.

It belongs to the class I-like SAM-binding methyltransferase superfamily. Cation-dependent O-methyltransferase family. As to quaternary structure, homodimer. The cofactor is a divalent metal cation.

The enzyme catalyses a catechol + S-adenosyl-L-methionine = a guaiacol + S-adenosyl-L-homocysteine + H(+). Inhibited by EDTA. In terms of biological role, catechol O-methyltransferase that can use various catechol-like compounds such as gallic acid (GA), 3,4-dihydroxy-5-methoxy-benzoic acid (5OMeBA), protocatechuic acid (PCA), 3,4-dihydroxy-benzaldehyde (DHA), dopamine, caffeic acid (CA), luteolin, quercetin, and 5-hydroxyuridine. This Mycobacterium tuberculosis (strain ATCC 25618 / H37Rv) protein is Catechol O-methyltransferase.